A 585-amino-acid polypeptide reads, in one-letter code: MENDKASHASPSIGVNEFVVQGEISIDDSERSVKSVSVSISDDEDSKTDVQDNMATPSTRSKFQTDLAIDNRLLEKDPKYKKLFTEKRRRRRPESCINLMTKGKGTGQKDNINDQIFSLRILPGSDLNSLKDSLWIIKISTQPDVEKTIARAFSDFYWLYHQLQNNHWGKTIPPPTRSNILVEKDEFAINHLFMIRNNEKYDPIFNFKPEYIISLQLMAMIKHIFNDKVLRLDSNFIDFISWDDDLPESLQIVVDDSTFTGDKILMTSSQFRELKEFHKQSKKVESITNSHASLIPVTELTEIYISPTKLFSRKDYQRLFQPQSTDNTFNNNDPLIQEWIPKSKTLFTSLSFGSSAPTYQEASTEIQACHDWVSISKEQWKQLLYHVLQYIVDEAVKVNSVINEFTECLKQISLDEVIRANSELFLKFSKLNESFLKKFKGASRQDILKLIILFDENVRFCESFESILNQRLKLGKILSIIEVDLDKKKNFLDKLSPGNNNSNNEDLKIRTAEDEYRIVLKRYNRVKQSWEKIMEDILNERKEFEKREAAEVNSCLKSIRDLNMDEKKHYLQLWQDFVPDEHISQ.

Residues 27–59 (DDSERSVKSVSVSISDDEDSKTDVQDNMATPST) form a disordered region.

This is an uncharacterized protein from Saccharomyces cerevisiae (strain ATCC 204508 / S288c) (Baker's yeast).